We begin with the raw amino-acid sequence, 318 residues long: Methionyl-tRNA formyltransferase (318 aa).

112–115 serves as a coordination point for (6S)-5,6,7,8-tetrahydrofolate; it reads SLLP.

Belongs to the Fmt family.

The catalysed reaction is L-methionyl-tRNA(fMet) + (6R)-10-formyltetrahydrofolate = N-formyl-L-methionyl-tRNA(fMet) + (6S)-5,6,7,8-tetrahydrofolate + H(+). In terms of biological role, attaches a formyl group to the free amino group of methionyl-tRNA(fMet). The formyl group appears to play a dual role in the initiator identity of N-formylmethionyl-tRNA by promoting its recognition by IF2 and preventing the misappropriation of this tRNA by the elongation apparatus. In Mycobacterium leprae (strain Br4923), this protein is Methionyl-tRNA formyltransferase.